Consider the following 264-residue polypeptide: Regulatory protein RecX (264 aa).

Belongs to the RecX family.

The protein localises to the cytoplasm. Negatively modulates RecA activity. The sequence is that of Regulatory protein RecX from Bacillus subtilis (strain 168).